Consider the following 367-residue polypeptide: Alpha-2-HS-glycoprotein (367 aa).

The first 18 residues, 1 to 18, serve as a signal peptide directing secretion; the sequence is MKSLVLLLCLAQLWGCHS. A Cystatin fetuin-A-type 1 domain is found at 27–133; it reads YRQPNCDDPE…KFSVVYAKCD (107 aa). 6 disulfide bridges follow: Cys32–Cys358, Cys89–Cys100, Cys114–Cys132, Cys146–Cys149, Cys208–Cys219, and Cys230–Cys247. A phosphoserine mark is found at Ser134, Ser135, and Ser138. Positions 144–255 constitute a Cystatin fetuin-A-type 2 domain; that stretch reads KVCQDCPLLA…TCTVFQTQPV (112 aa). 2 N-linked (GlcNAc...) asparagine glycosylation sites follow: Asn156 and Asn176. Residues 254–301 form a disordered region; the sequence is PVTSQPQPEGANETVPTPVVDPDAPPSPPLGAPGLPPAGSPPDSHVLL. Asn265 is a glycosylation site (N-linked (GlcNAc...) asparagine). Residues 276 to 293 are compositionally biased toward pro residues; the sequence is DAPPSPPLGAPGLPPAGS. The propeptide at 301–340 is connecting peptide; that stretch reads LAAPPGHQLHWAHYDLRHTFMGVVSLGSPSGEASHPRKTR. Thr319 bears the Phosphothreonine mark. A phosphoserine mark is found at Ser325, Ser328, and Ser330. A glycan (O-linked (GalNAc...) threonine) is linked at Thr339.

This sequence belongs to the fetuin family. In terms of assembly, alpha-2-HS glycoprotein derives from this precursor, when the connecting peptide is cleaved off. The two chains A and B are held together by a single disulfide bond. In terms of processing, phosphorylated by FAM20C in the extracellular medium.

Its subcellular location is the secreted. In terms of biological role, promotes endocytosis, possesses opsonic properties and influences the mineral phase of bone. Shows affinity for calcium and barium ions. This Pan troglodytes (Chimpanzee) protein is Alpha-2-HS-glycoprotein (AHSG).